The sequence spans 119 residues: Holo-[acyl-carrier-protein] synthase (119 aa).

D8 and E58 together coordinate Mg(2+).

The protein belongs to the P-Pant transferase superfamily. AcpS family. It depends on Mg(2+) as a cofactor.

Its subcellular location is the cytoplasm. It carries out the reaction apo-[ACP] + CoA = holo-[ACP] + adenosine 3',5'-bisphosphate + H(+). Functionally, transfers the 4'-phosphopantetheine moiety from coenzyme A to a Ser of acyl-carrier-protein. This chain is Holo-[acyl-carrier-protein] synthase, found in Bacillus cereus (strain ATCC 14579 / DSM 31 / CCUG 7414 / JCM 2152 / NBRC 15305 / NCIMB 9373 / NCTC 2599 / NRRL B-3711).